The following is a 1356-amino-acid chain: Kinesin-like protein KIF24 (1356 aa).

In terms of domain architecture, SAM spans 1-64 (MASWLYECLC…FQLIKIIKIM (64 aa)). The disordered stretch occupies residues 93–119 (GPRRQLHFDSPSASKDKMANNETGSLS). The residue at position 102 (Ser102) is a Phosphoserine. The Kinesin motor domain occupies 218–541 (KIRVCVRKRP…LRYADRVKEL (324 aa)). Residue 308–315 (GQTGAGKT) participates in ATP binding. Residue Ser473 is modified to Phosphoserine. The tract at residues 473 to 702 (SLLALKECIR…PTRGKKVQPV (230 aa)) is interaction with MPHOSPH9. The span at 552 to 571 (TSQNQTSANASPKRIQSSPV) shows a compositional bias: polar residues. Disordered stretches follow at residues 552–581 (TSQNQTSANASPKRIQSSPVTLPGDKCSPK), 597–664 (PTKV…LCSE), 788–840 (EGRL…STAL), 897–947 (RGAL…HQKP), and 964–998 (VPEQAEGSLSSPSPENGLSFPLSHVAVSGSPDQRD). The residue at position 579 (Ser579) is a Phosphoserine. Residue Thr615 is modified to Phosphothreonine; by NEK2. Ser616 bears the Phosphoserine; by NEK2 mark. Ser640, Ser817, and Ser820 each carry phosphoserine. Basic residues predominate over residues 640–653 (SPRKGTTRSGHSIK). The segment covering 810 to 821 (QAEDLDDSDFSE) has biased composition (acidic residues). Polar residues predominate over residues 830–840 (QPAMKQGSTAL). The segment covering 970–979 (GSLSSPSPEN) has biased composition (polar residues). At Ser1008 the chain carries Phosphoserine. Positions 1109–1140 (LSSSPPDNRPSGDLPALSPSPIHQHSPDKLPG) are disordered.

This sequence belongs to the TRAFAC class myosin-kinesin ATPase superfamily. Kinesin family. In terms of assembly, interacts with CCP110, CEP97, TALPID3. Interacts with MPHOSPH9. As to expression, expressed in brain, spinal cord, and small intestine.

It localises to the cytoplasm. The protein resides in the cytoskeleton. The protein localises to the microtubule organizing center. Its subcellular location is the centrosome. It is found in the centriole. Its function is as follows. Microtubule-dependent motor protein that acts as a negative regulator of ciliogenesis by mediating recruitment of CCP110 to mother centriole in cycling cells, leading to restrict nucleation of cilia at centrioles. Mediates depolymerization of microtubules of centriolar origin, possibly to suppress aberrant cilia formation. Following activation by NEK2 involved in disassembly of primary cilium during G2/M phase but does not disassemble fully formed ciliary axonemes. As cilium assembly and disassembly is proposed to coexist in a dynamic equilibrium may suppress nascent cilium assembly and, potentially, ciliar re-assembly in cells that have already disassembled their cilia ensuring the completion of cilium removal in the later stages of the cell cycle. Plays an important role in recruiting MPHOSPH9, a negative regulator of cilia formation to the distal end of mother centriole. This is Kinesin-like protein KIF24 (Kif24) from Mus musculus (Mouse).